A 339-amino-acid chain; its full sequence is Anthranilate phosphoribosyltransferase (339 aa).

5-phospho-alpha-D-ribose 1-diphosphate is bound by residues G79, 82-83 (GD), S87, 89-92 (NIST), 107-115 (KHGNRSVSS), and S119. G79 lines the anthranilate pocket. S91 is a binding site for Mg(2+). N110 lines the anthranilate pocket. R165 contributes to the anthranilate binding site. Mg(2+) is bound by residues D224 and E225.

It belongs to the anthranilate phosphoribosyltransferase family. As to quaternary structure, homodimer. Mg(2+) serves as cofactor.

The catalysed reaction is N-(5-phospho-beta-D-ribosyl)anthranilate + diphosphate = 5-phospho-alpha-D-ribose 1-diphosphate + anthranilate. Its pathway is amino-acid biosynthesis; L-tryptophan biosynthesis; L-tryptophan from chorismate: step 2/5. Functionally, catalyzes the transfer of the phosphoribosyl group of 5-phosphorylribose-1-pyrophosphate (PRPP) to anthranilate to yield N-(5'-phosphoribosyl)-anthranilate (PRA). This chain is Anthranilate phosphoribosyltransferase, found in Exiguobacterium sibiricum (strain DSM 17290 / CCUG 55495 / CIP 109462 / JCM 13490 / 255-15).